A 664-amino-acid polypeptide reads, in one-letter code: tRNA (carboxymethyluridine(34)-5-O)-methyltransferase ALKBH8 (664 aa).

The 76-residue stretch at 45-120 (LVIANGGLGN…QKIFLYLNFV (76 aa)) folds into the RRM domain. Residues 220 to 337 (KPDQLTINQY…RTSFTFRKVR (118 aa)) enclose the Fe2OG dioxygenase domain. 227 to 229 (NQY) provides a ligand contact to 2-oxoglutarate. H238 and D240 together coordinate Fe cation. H242 contributes to the Zn(2+) binding site. H292 provides a ligand contact to Fe cation. 2 residues coordinate 2-oxoglutarate: R328 and R334. Residues C341, C343, and C349 each coordinate Zn(2+). The segment at 411–664 (ADIGCGNGKY…GNWCVVLQKV (254 aa)) is methyltransferase domain.

It belongs to the alkB family. In terms of assembly, interacts with TRMT112. Fe(2+) serves as cofactor.

The protein resides in the cytoplasm. It is found in the nucleus. The enzyme catalyses 5-(carboxymethyl)uridine(34) in tRNA + S-adenosyl-L-methionine = 5-(2-methoxy-2-oxoethyl)uridine(34) in tRNA + S-adenosyl-L-homocysteine. Catalyzes the methylation of 5-carboxymethyl uridine to 5-methylcarboxymethyl uridine at the wobble position of the anticodon loop in tRNA via its methyltransferase domain. Catalyzes the last step in the formation of 5-methylcarboxymethyl uridine at the wobble position of the anticodon loop in target tRNA. Has a preference for tRNA(Arg) and tRNA(Glu), and does not bind tRNA(Lys). Binds tRNA and catalyzes the iron and alpha-ketoglutarate dependent hydroxylation of 5-methylcarboxymethyl uridine at the wobble position of the anticodon loop in tRNA via its dioxygenase domain, giving rise to 5-(S)-methoxycarbonylhydroxymethyluridine; has a preference for tRNA(Gly). Required for normal survival after DNA damage. May inhibit apoptosis and promote cell survival and angiogenesis. The chain is tRNA (carboxymethyluridine(34)-5-O)-methyltransferase ALKBH8 (Alkbh8) from Mus musculus (Mouse).